Here is a 61-residue protein sequence, read N- to C-terminus: Large ribosomal subunit protein bL32 (61 aa).

The segment covering 1–18 has biased composition (basic residues); that stretch reads MAIVPKRKTSKQRKRKRQ. The segment at 1–20 is disordered; that stretch reads MAIVPKRKTSKQRKRKRQTH.

Belongs to the bacterial ribosomal protein bL32 family.

The sequence is that of Large ribosomal subunit protein bL32 (rpmF) from Mycoplasmopsis pulmonis (strain UAB CTIP) (Mycoplasma pulmonis).